The following is a 155-amino-acid chain: Class I hydrophobin C (155 aa).

Positions Met-1 to Gly-22 are cleaved as a signal peptide. Disulfide bonds link Cys-52/Cys-129, Cys-60/Cys-123, Cys-61/Cys-101, and Cys-130/Cys-148.

It belongs to the fungal hydrophobin family. Self-assembles to form functional amyloid fibrils called rodlets. Self-assembly into fibrillar rodlets occurs spontaneously at hydrophobic:hydrophilic interfaces and the rodlets further associate laterally to form amphipathic monolayers.

It localises to the secreted. The protein localises to the spore wall. In terms of biological role, aerial growth, conidiation, and dispersal of filamentous fungi in the environment rely upon a capability of their secreting small amphipathic proteins called hydrophobins (HPBs) with low sequence identity. Class I can self-assemble into an outermost layer of rodlet bundles on aerial cell surfaces, conferring cellular hydrophobicity that supports fungal growth, development and dispersal; whereas Class II form highly ordered films at water-air interfaces through intermolecular interactions but contribute nothing to the rodlet structure. RodC is a class I hydrophobin that, unlike rodA, is not required for rodlet formation. This is Class I hydrophobin C from Aspergillus fumigatus (strain ATCC MYA-4609 / CBS 101355 / FGSC A1100 / Af293) (Neosartorya fumigata).